Consider the following 444-residue polypeptide: Crh-like protein 3 (444 aa).

The first 19 residues, 1–19 (MVGKSTLLSVLASASVAFA), serve as a signal peptide directing secretion. Cys27 and Cys34 are joined by a disulfide. Positions 57-271 (SLESCVPEPV…WAGGEIDWNS (215 aa)) constitute a GH16 domain. The active-site Nucleophile is the Glu157. Glu161 serves as the catalytic Proton donor. Glu161 serves as a coordination point for chitin. Residues Asn187 and Asn228 are each glycosylated (N-linked (GlcNAc...) asparagine). 2 residues coordinate chitin: Trp248 and Thr259. Residues Asn315, Asn323, Asn336, and Asn371 are each glycosylated (N-linked (GlcNAc...) asparagine). A lipid anchor (GPI-anchor amidated serine) is attached at Ser415. Positions 416–444 (ADSLVANQERVLKGSLFAGIVAVVAMMAL) are cleaved as a propeptide — removed in mature form.

This sequence belongs to the glycosyl hydrolase 16 family. CRH1 subfamily. Forms homodimers as well as heterodimers with other crh protein members crh1 and crh2. Dimerization may be necessary for the transglycosylation activity.

The protein resides in the cell membrane. The enzyme catalyses Random endo-hydrolysis of N-acetyl-beta-D-glucosaminide (1-&gt;4)-beta-linkages in chitin and chitodextrins.. Functionally, dual chitinase/transglycosylase that plays a role in cell wall architecture. Chitinase and transglycosylase activities are coupled. Required for the polysaccharide cross-linking at the septa and the cell wall. More specifically, transfers chitin to 1,6-beta-glucan in the cell wall. The sequence is that of Crh-like protein 3 from Botryotinia fuckeliana (strain B05.10) (Noble rot fungus).